The chain runs to 164 residues: Oocyte-expressed protein homolog (164 aa).

The region spanning 44–105 is the KH; atypical domain; sequence PLVLYMEAWV…SAQTRMKNIL (62 aa).

The protein belongs to the KHDC1 family. As to quaternary structure, component of the subcortical maternal complex (SCMC), at least composed of NLRP5, KHDC3, OOEP, and TLE6. Within the complex, interacts with NLRP5, KHDC3 and TLE6. The SCMC may facilitate translocation of its components between the nuclear and cytoplasmic compartments. As part of the SCMC interacts with the SCMC-associated protein NLRP4F. Forms a scaffold complex with KHDC3/FILIA, and interacts with BLM and TRIM25 at DNA replication forks. In terms of tissue distribution, expressed in ovaries, where it is restricted to growing oocytes, with greatest levels in fully grown oocytes.

The protein resides in the cytoplasm. The protein localises to the nucleus. In terms of biological role, component of the subcortical maternal complex (SCMC), a multiprotein complex that plays a key role in early embryonic development. The SCMC complex is a structural constituent of cytoplasmic lattices, which consist in fibrous structures found in the cytoplasm of oocytes and preimplantation embryos. They are required to store maternal proteins critical for embryonic development, such as proteins that control epigenetic reprogramming of the preimplantation embryo, and prevent their degradation or activation. As part of the OOEP-KHDC3 scaffold, recruits BLM and TRIM25 to DNA replication forks, thereby promoting the ubiquitination of BLM by TRIM25, enhancing BLM retainment at replication forks and therefore promoting stalled replication fork restart. Positively regulates the homologous recombination-mediated DNA double-strand break (DSB) repair pathway by regulating ATM activation and RAD51 recruitment to DSBs in oocytes. Thereby contributes to oocyte survival and the resumption and completion of meiosis. The sequence is that of Oocyte-expressed protein homolog from Mus musculus (Mouse).